The chain runs to 105 residues: Large ribosomal subunit protein bL21 (105 aa).

The protein belongs to the bacterial ribosomal protein bL21 family. Part of the 50S ribosomal subunit. Contacts protein L20.

In terms of biological role, this protein binds to 23S rRNA in the presence of protein L20. The chain is Large ribosomal subunit protein bL21 from Rhizobium etli (strain ATCC 51251 / DSM 11541 / JCM 21823 / NBRC 15573 / CFN 42).